The following is a 107-amino-acid chain: SH3 domain-binding glutamic acid-rich-like protein 2 (107 aa).

An SH3-binding motif is present at residues 61 to 67; that stretch reads QGNPLPP.

It belongs to the SH3BGR family.

It is found in the nucleus. This chain is SH3 domain-binding glutamic acid-rich-like protein 2 (SH3BGRL2), found in Bos taurus (Bovine).